Here is an 83-residue protein sequence, read N- to C-terminus: U4-theraphotoxin-Hhn1x (83 aa).

The first 20 residues, 1-20 (MTLIAILTCAAALVLHTTAA), serve as a signal peptide directing secretion. The propeptide occupies 21–46 (EELEAESQLMEVGMPDTELEAVDEER). Disulfide bonds link cysteine 50/cysteine 64, cysteine 54/cysteine 75, and cysteine 69/cysteine 80.

The protein belongs to the neurotoxin 12 (Hwtx-2) family. 02 (Hwtx-2) subfamily. In terms of tissue distribution, expressed by the venom gland.

The protein resides in the secreted. Functionally, postsynaptic neurotoxin. In Cyriopagopus hainanus (Chinese bird spider), this protein is U4-theraphotoxin-Hhn1x.